The primary structure comprises 134 residues: Transmembrane protein 100 (134 aa).

At Ser-15 the chain carries Phosphoserine. 2 consecutive transmembrane segments (helical) span residues 56–76 (CVIPFAVVVLITGTVVTAVAY) and 84–104 (IISILGLVLLSLGLFLLASSA). A Phosphoserine modification is found at Ser-121.

In terms of assembly, interacts (via C-terminus) with TRPA1 and TRPV1. Interacts with TASOR.

It localises to the cell membrane. Its subcellular location is the membrane. The protein localises to the perikaryon. It is found in the cytoplasm. The protein resides in the perinuclear region. It localises to the endoplasmic reticulum. In terms of biological role, plays a role during embryonic arterial endothelium differentiation and vascular morphogenesis through the ACVRL1 receptor-dependent signaling pathway upon stimulation by bone morphogenetic proteins, such as GDF2/BMP9 and BMP10. Involved in the regulation of nociception, acting as a modulator of the interaction between TRPA1 and TRPV1, two molecular sensors and mediators of pain signals in dorsal root ganglia (DRG) neurons. Mechanistically, it weakens their interaction, thereby releasing the inhibition of TRPA1 by TRPV1 and increasing the single-channel open probability of the TRPA1-TRPV1 complex. This chain is Transmembrane protein 100 (TMEM100), found in Bos taurus (Bovine).